The following is a 574-amino-acid chain: Isocitrate dehydrogenase kinase/phosphatase (574 aa).

ATP contacts are provided by residues 315-321 (APGIRGM) and lysine 336. Residue aspartate 371 is part of the active site.

It belongs to the AceK family.

Its subcellular location is the cytoplasm. It carries out the reaction L-seryl-[isocitrate dehydrogenase] + ATP = O-phospho-L-seryl-[isocitrate dehydrogenase] + ADP + H(+). In terms of biological role, bifunctional enzyme which can phosphorylate or dephosphorylate isocitrate dehydrogenase (IDH) on a specific serine residue. This is a regulatory mechanism which enables bacteria to bypass the Krebs cycle via the glyoxylate shunt in response to the source of carbon. When bacteria are grown on glucose, IDH is fully active and unphosphorylated, but when grown on acetate or ethanol, the activity of IDH declines drastically concomitant with its phosphorylation. This chain is Isocitrate dehydrogenase kinase/phosphatase, found in Escherichia coli (strain SMS-3-5 / SECEC).